Here is a 134-residue protein sequence, read N- to C-terminus: Histone H2A (134 aa).

A compositionally biased stretch (gly residues) spans 1–10; the sequence is MTGGKSGGKA. The disordered stretch occupies residues 1-26; it reads MTGGKSGGKASGSKSSAQSRSSKAGL. N6-acetyllysine occurs at positions 5 and 9. Over residues 11 to 25 the composition is skewed to low complexity; sequence SGSKSSAQSRSSKAG. Glutamine 107 is subject to N5-methylglutamine. Serine 131 bears the Phosphoserine mark. A [ST]-Q motif motif is present at residues 131–132; that stretch reads SQ.

The protein belongs to the histone H2A family. The nucleosome is a histone octamer containing two molecules each of H2A, H2B, H3 and H4 assembled in one H3-H4 heterotetramer and two H2A-H2B heterodimers. The octamer wraps approximately 147 bp of DNA. In terms of processing, phosphorylated to form H2AS128ph (gamma-H2A) in response to DNA double-strand breaks (DSBs) generated by exogenous genotoxic agents and by stalled replication forks. Phosphorylation is dependent on the DNA damage checkpoint kinases MEC1/ATR and TEL1/ATM, spreads on either side of a detected DSB site and may mark the surrounding chromatin for recruitment of proteins required for DNA damage signaling and repair. Gamma-H2A is removed from the DNA prior to the strand invasion-primer extension step of the repair process and subsequently dephosphorylated. Dephosphorylation is necessary for efficient recovery from the DNA damage checkpoint. Acetylated by ESA1 to form H2AK4ac and H2AK7ac.

It localises to the nucleus. The protein resides in the chromosome. Core component of nucleosome which plays a central role in DNA double strand break (DSB) repair. Nucleosomes wrap and compact DNA into chromatin, limiting DNA accessibility to the cellular machineries which require DNA as a template. Histones thereby play a central role in transcription regulation, DNA repair, DNA replication and chromosomal stability. DNA accessibility is regulated via a complex set of post-translational modifications of histones, also called histone code, and nucleosome remodeling. This is Histone H2A (HTA1) from Phaeosphaeria nodorum (strain SN15 / ATCC MYA-4574 / FGSC 10173) (Glume blotch fungus).